Reading from the N-terminus, the 382-residue chain is Mannitol-1-phosphate 5-dehydrogenase (382 aa).

Residue 3–14 coordinates NAD(+); it reads ALHFGAGNIGRG. Lysine 269 bears the N6-acetyllysine mark.

Belongs to the mannitol dehydrogenase family.

It carries out the reaction D-mannitol 1-phosphate + NAD(+) = beta-D-fructose 6-phosphate + NADH + H(+). This Escherichia coli (strain ATCC 8739 / DSM 1576 / NBRC 3972 / NCIMB 8545 / WDCM 00012 / Crooks) protein is Mannitol-1-phosphate 5-dehydrogenase.